Consider the following 317-residue polypeptide: Probable deoxyhypusine synthase 1 (317 aa).

The active-site Nucleophile is Lys-285.

This sequence belongs to the deoxyhypusine synthase family. Requires NAD(+) as cofactor.

It carries out the reaction [eIF5A protein]-L-lysine + spermidine = [eIF5A protein]-deoxyhypusine + propane-1,3-diamine. The protein operates within protein modification; eIF5A hypusination. In terms of biological role, catalyzes the NAD-dependent oxidative cleavage of spermidine and the subsequent transfer of the butylamine moiety of spermidine to the epsilon-amino group of a specific lysine residue of the eIF-5A precursor protein to form the intermediate deoxyhypusine residue. This chain is Probable deoxyhypusine synthase 1 (dys1), found in Methanosarcina mazei (strain ATCC BAA-159 / DSM 3647 / Goe1 / Go1 / JCM 11833 / OCM 88) (Methanosarcina frisia).